Reading from the N-terminus, the 274-residue chain is MQRLIEGLQKFREGYFSSHRDLFEQLSHGQHPRILFICCSDSRVDPNLITQSEVGDLFVIRNAGNIIPPYGAANGGEGAAMEYALVALEINQIIVCGHSHCGAMKGLLKLNSLQEKLPLVYDWLKHTEATRRLVLDNYSHLEGEDLIEVAVAENILTQLKNLQTYPAIHSRLHRGDLSLHGWIYRIEEGEVLAYDGVLHDFVAPQSRINALEPEDEYAPHPNSPLISYDAFKVPGKERPGREKATESPAPQLSPLPGFGHLPREQAERIYRGSR.

C39, H98, and C101 together coordinate Zn(2+). The interval 214–274 (EDEYAPHPNS…QAERIYRGSR (61 aa)) is disordered. 2 stretches are compositionally biased toward basic and acidic residues: residues 234-245 (PGKERPGREKAT) and 261-274 (LPRE…RGSR).

It belongs to the beta-class carbonic anhydrase family. In terms of assembly, a hexamer formed by a trimer of dimers. Interacts with the first 260 residues of CcmM; both the N-terminal 206 residues and the C-terminal tail contribute to CcmM binding. Interacts with full-length and the N-terminal 249 residues of CcmM. A probable CcmM-CcaA-CcmN complex as well as a CcaA-RuBisCO-CcmM complex can also be isolated. Zn(2+) serves as cofactor.

It localises to the carboxysome. The catalysed reaction is hydrogencarbonate + H(+) = CO2 + H2O. Its activity is regulated as follows. Inhibited by ethoxyzolamide. Its function is as follows. Reversible hydration of carbon dioxide. Essential to photosynthetic carbon dioxide fixation, supplies CO(2) to RuBisCO (ribulose bisphosphate carboxylase, rbcL-rbcS) in the carboxysome. The polypeptide is Carbonic anhydrase (Synechocystis sp. (strain ATCC 27184 / PCC 6803 / Kazusa)).